Here is a 188-residue protein sequence, read N- to C-terminus: Elongation factor P (188 aa).

Belongs to the elongation factor P family.

It is found in the cytoplasm. Its pathway is protein biosynthesis; polypeptide chain elongation. In terms of biological role, involved in peptide bond synthesis. Stimulates efficient translation and peptide-bond synthesis on native or reconstituted 70S ribosomes in vitro. Probably functions indirectly by altering the affinity of the ribosome for aminoacyl-tRNA, thus increasing their reactivity as acceptors for peptidyl transferase. In Rickettsia massiliae (strain Mtu5), this protein is Elongation factor P.